The primary structure comprises 314 residues: 4-hydroxy-3-methylbut-2-enyl diphosphate reductase (314 aa).

Cysteine 12 is a binding site for [4Fe-4S] cluster. Positions 41 and 74 each coordinate (2E)-4-hydroxy-3-methylbut-2-enyl diphosphate. Dimethylallyl diphosphate is bound by residues histidine 41 and histidine 74. Isopentenyl diphosphate contacts are provided by histidine 41 and histidine 74. Position 96 (cysteine 96) interacts with [4Fe-4S] cluster. A (2E)-4-hydroxy-3-methylbut-2-enyl diphosphate-binding site is contributed by histidine 124. Residue histidine 124 coordinates dimethylallyl diphosphate. Histidine 124 lines the isopentenyl diphosphate pocket. Glutamate 126 acts as the Proton donor in catalysis. Position 167 (threonine 167) interacts with (2E)-4-hydroxy-3-methylbut-2-enyl diphosphate. Residue cysteine 197 coordinates [4Fe-4S] cluster. 4 residues coordinate (2E)-4-hydroxy-3-methylbut-2-enyl diphosphate: serine 225, serine 226, asparagine 227, and serine 269. Residues serine 225, serine 226, asparagine 227, and serine 269 each coordinate dimethylallyl diphosphate. Residues serine 225, serine 226, asparagine 227, and serine 269 each coordinate isopentenyl diphosphate.

The protein belongs to the IspH family. [4Fe-4S] cluster is required as a cofactor.

The catalysed reaction is isopentenyl diphosphate + 2 oxidized [2Fe-2S]-[ferredoxin] + H2O = (2E)-4-hydroxy-3-methylbut-2-enyl diphosphate + 2 reduced [2Fe-2S]-[ferredoxin] + 2 H(+). The enzyme catalyses dimethylallyl diphosphate + 2 oxidized [2Fe-2S]-[ferredoxin] + H2O = (2E)-4-hydroxy-3-methylbut-2-enyl diphosphate + 2 reduced [2Fe-2S]-[ferredoxin] + 2 H(+). Its pathway is isoprenoid biosynthesis; dimethylallyl diphosphate biosynthesis; dimethylallyl diphosphate from (2E)-4-hydroxy-3-methylbutenyl diphosphate: step 1/1. The protein operates within isoprenoid biosynthesis; isopentenyl diphosphate biosynthesis via DXP pathway; isopentenyl diphosphate from 1-deoxy-D-xylulose 5-phosphate: step 6/6. Catalyzes the conversion of 1-hydroxy-2-methyl-2-(E)-butenyl 4-diphosphate (HMBPP) into a mixture of isopentenyl diphosphate (IPP) and dimethylallyl diphosphate (DMAPP). Acts in the terminal step of the DOXP/MEP pathway for isoprenoid precursor biosynthesis. The sequence is that of 4-hydroxy-3-methylbut-2-enyl diphosphate reductase from Actinobacillus pleuropneumoniae serotype 3 (strain JL03).